Consider the following 141-residue polypeptide: Hemoglobin subunit alpha-D (141 aa).

Residues 1-141 form the Globin domain; sequence VLTAEDKKLI…VAAVLAEKYR (141 aa). Residues His58 and His87 each contribute to the heme b site.

The protein belongs to the globin family. In terms of assembly, heterotetramer of two alpha-D chains and two beta chains. As to expression, red blood cells.

Its function is as follows. Involved in oxygen transport from the lung to the various peripheral tissues. In Sturnus vulgaris (Starling), this protein is Hemoglobin subunit alpha-D (HBAD).